An 814-amino-acid chain; its full sequence is Cadherin-15 (814 aa).

Positions 1–21 are cleaved as a signal peptide; the sequence is MDAAFLLVLGLLAQSLCLSLG. Positions 22-60 are excised as a propeptide; sequence VPGWRRPTTLYPWRRAPALSRVRRAWVIPPISVSENHKR. 5 Cadherin domains span residues 61-152, 153-260, 261-375, 376-481, and 482-590; these read LPYP…RPAF, LQEA…APEF, TRDE…PPVF, QENP…DHAP, and VLAP…VCLP. Residues 61–606 are Extracellular-facing; sequence LPYPLVQIKS…AGGTGLSLGA (546 aa). A glycan (N-linked (GlcNAc...) asparagine) is linked at asparagine 227. 3 N-linked (GlcNAc...) asparagine glycosylation sites follow: asparagine 531, asparagine 538, and asparagine 576. A helical transmembrane segment spans residues 607 to 626; that stretch reads LVIVLASALLLLVLVLLVAL. Topologically, residues 627–814 are cytoplasmic; the sequence is RARFWKQSRG…LLPRHRGRTA (188 aa). Disordered stretches follow at residues 636-663 and 676-703; these read GKGLLHGPQDDLRDNVLNYDEQGGGEED and TALSLPLGPPPLRRDAPQGRLHPQPPRV.

In terms of tissue distribution, expressed in the brain and cerebellum.

It is found in the cell membrane. Functionally, cadherins are calcium-dependent cell adhesion proteins. They preferentially interact with themselves in a homophilic manner in connecting cells; cadherins may thus contribute to the sorting of heterogeneous cell types. M-cadherin is part of the myogenic program and may provide a trigger for terminal muscle differentiation. This chain is Cadherin-15 (CDH15), found in Homo sapiens (Human).